The chain runs to 71 residues: Potassium voltage-gated channel subfamily E member 2 (71 aa).

A helical membrane pass occupies residues 7–27; the sequence is VILYLMVMIGMFSFIIVAILV. The Cytoplasmic segment spans residues 28–71; sequence STVKSKRREHSNDPYHQYIVEDWQEKYKSQILHFEEAKATIHEN.

The protein belongs to the potassium channel KCNE family. Interacts with KCNB1. Associates with KCNH2/ERG1. May associate with KCNQ2 and KCNQ3. Associates with HCN1 and probably HCN2. Heteromultimer with KCNC2. Interacts with KCNC2. Interacts with KCNQ1; forms a heterooligomer complex that targets to the membrane raft and leading to currents with an apparently instantaneous activation, a rapid deactivation process and a linear current-voltage relationship and decreases the amplitude of the outward current. Detected in heart; expression is highest in the SA node and the right atrium, and barely detectable in the ventricle.

Its subcellular location is the cell membrane. The protein localises to the apical cell membrane. Its function is as follows. Ancillary protein that functions as a regulatory subunit of the voltage-gated potassium (Kv) channel complex composed of pore-forming and potassium-conducting alpha subunits and of regulatory beta subunits. KCNE2 beta subunit modulates the gating kinetics and enhances stability of the channel complex. Alters the gating of the delayed rectifier Kv channel containing KCNB1 alpha subunit. Associates with KCNH2/HERG alpha subunit Kv channel to form the rapidly activating component of the delayed rectifying potassium current (IKr) in heart. May associate with KCNQ2 and/or KCNQ3 alpha subunits to modulate the native M-type current. May associate with HCN1 and HCN2 channel subunits to increase potassium current. Forms a heterooligomer complex with KCNQ1/KVLQT1 alpha subunits which leads to currents with an apparently instantaneous activation, a rapid deactivation process and a linear current-voltage relationship and decreases the amplitude of the outward current. KCNQ1-KCNE2 channel associates with Na(+)-coupled myo-inositol symporter in the apical membrane of choroid plexus epithelium and regulates the myo-inositol gradient between blood and cerebrospinal fluid with an impact on neuron excitability. This Oryctolagus cuniculus (Rabbit) protein is Potassium voltage-gated channel subfamily E member 2 (KCNE2).